Consider the following 155-residue polypeptide: DNA gyrase inhibitor (155 aa).

It belongs to the DNA gyrase inhibitor family. As to quaternary structure, interacts with DNA gyrase.

The protein localises to the cytoplasm. In terms of biological role, inhibits the supercoiling activity of DNA gyrase. Acts by inhibiting DNA gyrase at an early step, prior to (or at the step of) binding of DNA by the gyrase. It protects cells against toxins that target DNA gyrase, by inhibiting activity of these toxins and reducing the formation of lethal double-strand breaks in the cell. This is DNA gyrase inhibitor from Edwardsiella ictaluri (strain 93-146).